The chain runs to 156 residues: MRIIEGKLQLQGNEKVAILTSRFNHIITDRLKEGAMDCFKRHGGDEDLLDIVLVPGAYELPFILERLLGSGKYDGVCVLGAIIRGGTPHFDYVSAEATKGIAHAMLKYSMPVSFGVLTTDNIEQAIERAGSKAGNKGFEAMSTLIELLSLCQTLKG.

5-amino-6-(D-ribitylamino)uracil is bound by residues phenylalanine 23, 57–59 (AYE), and 81–83 (AII). Residue 86–87 (GT) participates in (2S)-2-hydroxy-3-oxobutyl phosphate binding. Histidine 89 (proton donor) is an active-site residue. Residue phenylalanine 114 coordinates 5-amino-6-(D-ribitylamino)uracil. Arginine 128 contributes to the (2S)-2-hydroxy-3-oxobutyl phosphate binding site.

This sequence belongs to the DMRL synthase family.

The enzyme catalyses (2S)-2-hydroxy-3-oxobutyl phosphate + 5-amino-6-(D-ribitylamino)uracil = 6,7-dimethyl-8-(1-D-ribityl)lumazine + phosphate + 2 H2O + H(+). It participates in cofactor biosynthesis; riboflavin biosynthesis; riboflavin from 2-hydroxy-3-oxobutyl phosphate and 5-amino-6-(D-ribitylamino)uracil: step 1/2. Functionally, catalyzes the formation of 6,7-dimethyl-8-ribityllumazine by condensation of 5-amino-6-(D-ribitylamino)uracil with 3,4-dihydroxy-2-butanone 4-phosphate. This is the penultimate step in the biosynthesis of riboflavin. This Helicobacter pylori (strain P12) protein is 6,7-dimethyl-8-ribityllumazine synthase.